The chain runs to 255 residues: uncharacterized protein (255 aa).

Helical transmembrane passes span 2-22 (LLPA…YGVL) and 168-188 (VASV…FNLF).

It is found in the cell membrane. This is an uncharacterized protein from Mycobacterium tuberculosis (strain ATCC 25618 / H37Rv).